The chain runs to 427 residues: Serine--tRNA ligase (427 aa).

231 to 233 (TAE) contacts L-serine. Residue 262–264 (RSE) coordinates ATP. Glu-285 contributes to the L-serine binding site. 349 to 352 (EISS) contributes to the ATP binding site. Ser-385 provides a ligand contact to L-serine.

Belongs to the class-II aminoacyl-tRNA synthetase family. Type-1 seryl-tRNA synthetase subfamily. Homodimer. The tRNA molecule binds across the dimer.

It localises to the cytoplasm. It catalyses the reaction tRNA(Ser) + L-serine + ATP = L-seryl-tRNA(Ser) + AMP + diphosphate + H(+). The enzyme catalyses tRNA(Sec) + L-serine + ATP = L-seryl-tRNA(Sec) + AMP + diphosphate + H(+). Its pathway is aminoacyl-tRNA biosynthesis; selenocysteinyl-tRNA(Sec) biosynthesis; L-seryl-tRNA(Sec) from L-serine and tRNA(Sec): step 1/1. Catalyzes the attachment of serine to tRNA(Ser). Is also able to aminoacylate tRNA(Sec) with serine, to form the misacylated tRNA L-seryl-tRNA(Sec), which will be further converted into selenocysteinyl-tRNA(Sec). This is Serine--tRNA ligase from Staphylococcus saprophyticus subsp. saprophyticus (strain ATCC 15305 / DSM 20229 / NCIMB 8711 / NCTC 7292 / S-41).